The primary structure comprises 87 residues: uncharacterized protein (87 aa).

2 helical membrane-spanning segments follow: residues 25 to 45 and 53 to 73; these read LVAA…WLGG and YAFL…LVTF.

It localises to the cell membrane. This is an uncharacterized protein from Paracoccus denitrificans.